A 123-amino-acid chain; its full sequence is uncharacterized protein (123 aa).

The interval 76–97 is disordered; that stretch reads ENNKRKKKSEGERVRSPRTFRG.

This is an uncharacterized protein from Saccharomyces cerevisiae (strain ATCC 204508 / S288c) (Baker's yeast).